A 518-amino-acid polypeptide reads, in one-letter code: Probable pectinesterase/pectinesterase inhibitor 16 (518 aa).

Residues Met1–Ala33 form the signal peptide. Positions Thr30–Leu172 are pectinesterase inhibitor 16. N-linked (GlcNAc...) asparagine glycosylation is found at Asn82 and Asn161. A pectinesterase 16 region spans residues Asp213–Asn502. Residues Thr289 and Gln319 each coordinate substrate. Catalysis depends on Asp342, which acts as the Proton donor; for pectinesterase activity. Asp363 acts as the Nucleophile; for pectinesterase activity in catalysis. Substrate is bound by residues Arg422 and Trp424.

This sequence in the N-terminal section; belongs to the PMEI family. It in the C-terminal section; belongs to the pectinesterase family. In terms of tissue distribution, expressed in siliques and floral stems.

It is found in the secreted. The protein localises to the cell wall. The enzyme catalyses [(1-&gt;4)-alpha-D-galacturonosyl methyl ester](n) + n H2O = [(1-&gt;4)-alpha-D-galacturonosyl](n) + n methanol + n H(+). The protein operates within glycan metabolism; pectin degradation; 2-dehydro-3-deoxy-D-gluconate from pectin: step 1/5. Functionally, acts in the modification of cell walls via demethylesterification of cell wall pectin. This chain is Probable pectinesterase/pectinesterase inhibitor 16 (PME16), found in Arabidopsis thaliana (Mouse-ear cress).